The following is a 65-amino-acid chain: Large ribosomal subunit protein uL29 (65 aa).

It belongs to the universal ribosomal protein uL29 family.

This chain is Large ribosomal subunit protein uL29, found in Desulforapulum autotrophicum (strain ATCC 43914 / DSM 3382 / VKM B-1955 / HRM2) (Desulfobacterium autotrophicum).